A 150-amino-acid chain; its full sequence is 3-dehydroquinate dehydratase (150 aa).

Y23 acts as the Proton acceptor in catalysis. Residues N79, H85, and D92 each contribute to the substrate site. H105 functions as the Proton donor in the catalytic mechanism. Substrate-binding positions include 106 to 107 (IS) and R116.

It belongs to the type-II 3-dehydroquinase family. As to quaternary structure, homododecamer.

It catalyses the reaction 3-dehydroquinate = 3-dehydroshikimate + H2O. The protein operates within metabolic intermediate biosynthesis; chorismate biosynthesis; chorismate from D-erythrose 4-phosphate and phosphoenolpyruvate: step 3/7. Catalyzes a trans-dehydration via an enolate intermediate. The polypeptide is 3-dehydroquinate dehydratase (Marinomonas sp. (strain MWYL1)).